The primary structure comprises 493 residues: MANYFNTLNLRQQLAQLGKCRFMQREEFADGCNVLKGKKVVIVGCGAQGLNQGLNMRDSGLDISYALRKAAITEKRASWQKATDNGFAVGTYEELIPTADLVLNLTPDKQHSDVVKTVMPLMKQGAALGYSHGFNVVEEGQQIRADITVVMVAPKCPGTEVREEYKRGFGVPTLIAVHPENDPKGEGMAIAKAWASATGGDRAGVLESSFVAEVKSDLMGEQTILCGMLQAGSLLCYDKLVAEGTDPAYAGKLIQFGWETITEALKQGGISLMMDRLSNPAKLRAFELSEQLKTLMRPLFEKHMDDIIAGEFSRGMMADWAEDDAKLFGWREETGKSAFENAPAFAGKIAEQEYFDNGVVMVAMVKAGVELAFETMVASGIYEESAYYESLHELPLIANTVARKRLYEMNVVISDTAEYGNYLFANAAVPLLREHFMPTLKAGDLGASKAEGQSVDNLALLAANEATRNHPIEKIGQVLRGYMKDMKRIAVGG.

Positions 15-208 constitute a KARI N-terminal Rossmann domain; the sequence is AQLGKCRFMQ…GGDRAGVLES (194 aa). NADP(+) contacts are provided by residues 45–48, Arg-68, Arg-76, Ser-78, and 108–110; these read CGAQ and DKQ. The active site involves His-132. Gly-158 contacts NADP(+). KARI C-terminal knotted domains follow at residues 209-344 and 345-486; these read SFVA…NAPA and FAGK…MKDM. Positions 217, 221, 389, and 393 each coordinate Mg(2+). Residue Ser-414 participates in substrate binding.

The protein belongs to the ketol-acid reductoisomerase family. The cofactor is Mg(2+).

It catalyses the reaction (2R)-2,3-dihydroxy-3-methylbutanoate + NADP(+) = (2S)-2-acetolactate + NADPH + H(+). The catalysed reaction is (2R,3R)-2,3-dihydroxy-3-methylpentanoate + NADP(+) = (S)-2-ethyl-2-hydroxy-3-oxobutanoate + NADPH + H(+). The protein operates within amino-acid biosynthesis; L-isoleucine biosynthesis; L-isoleucine from 2-oxobutanoate: step 2/4. It participates in amino-acid biosynthesis; L-valine biosynthesis; L-valine from pyruvate: step 2/4. In terms of biological role, involved in the biosynthesis of branched-chain amino acids (BCAA). Catalyzes an alkyl-migration followed by a ketol-acid reduction of (S)-2-acetolactate (S2AL) to yield (R)-2,3-dihydroxy-isovalerate. In the isomerase reaction, S2AL is rearranged via a Mg-dependent methyl migration to produce 3-hydroxy-3-methyl-2-ketobutyrate (HMKB). In the reductase reaction, this 2-ketoacid undergoes a metal-dependent reduction by NADPH to yield (R)-2,3-dihydroxy-isovalerate. The protein is Ketol-acid reductoisomerase (NADP(+)) of Aeromonas hydrophila subsp. hydrophila (strain ATCC 7966 / DSM 30187 / BCRC 13018 / CCUG 14551 / JCM 1027 / KCTC 2358 / NCIMB 9240 / NCTC 8049).